The chain runs to 264 residues: Phycocyanobilin:ferredoxin oxidoreductase (264 aa).

This sequence belongs to the HY2 family.

It carries out the reaction (2R,3Z)-phycocyanobilin + 4 oxidized [2Fe-2S]-[ferredoxin] = biliverdin IXalpha + 4 reduced [2Fe-2S]-[ferredoxin] + 4 H(+). Functionally, catalyzes the four-electron reduction of biliverdin IX-alpha (2-electron reduction at both the A and D rings); the reaction proceeds via an isolatable 2-electron intermediate, 181,182-dihydrobiliverdin. In Prochlorococcus marinus (strain MIT 9303), this protein is Phycocyanobilin:ferredoxin oxidoreductase.